The sequence spans 88 residues: HssA/B-like protein 13 (88 aa).

It belongs to the hssA/B family.

This chain is HssA/B-like protein 13 (hssl13), found in Dictyostelium discoideum (Social amoeba).